Consider the following 1227-residue polypeptide: JNK-interacting protein 3 (1227 aa).

Residues 1 to 22 are disordered; the sequence is MMDNDDALLNNGGPQSGAETVY. An RH1 domain is found at 25 to 113; sequence EDNNMVMSEK…VTQYEREKSA (89 aa). A coiled-coil region spans residues 84-191; sequence RINQEQDVEV…TELFKNHVDY (108 aa). Positions 281–323 are disordered; the sequence is DALQQQHHATSPQSPDSSPVVPNVPTNVGRSTTKKEQRSDNNL. Residues 290–308 show a composition bias toward low complexity; the sequence is TSPQSPDSSPVVPNVPTNV. Residues 363 to 489 adopt a coiled-coil conformation; the sequence is GKEVENLIME…EAVRLTEILR (127 aa). The 72-residue stretch at 453–524 folds into the RH2 domain; sequence RKRFTRVEMA…PSNRPTERVA (72 aa). 3 disordered regions span residues 517 to 572, 804 to 851, and 863 to 889; these read NRPT…HPAS, GKVE…AEEP, and PLPGAPQRLSTDGNQTNNNNNSSSSSN. Residues 526–540 show a composition bias toward gly residues; sequence GLGGGPMFRHTGGGS. Over residues 541-550 the composition is skewed to low complexity; the sequence is PAHSHGSPSR. The span at 807 to 817 shows a compositional bias: basic and acidic residues; that stretch reads EFVRVKPKSDD. Residues 814-849 adopt a coiled-coil conformation; that stretch reads KSDDEQNSNEKQQQEEEEAKEATEKSNEQLPAVSAE. Low complexity predominate over residues 879–889; the sequence is NNNNNSSSSSN.

This sequence belongs to the JIP scaffold family. As to quaternary structure, forms homo- and heterooligomeric complexes. Binds the TPR motif-containing C-terminal of kinesin light chain, Klc. Pre-assembled syd scaffolding complexes are then transported as a cargo of kinesin, to the required subcellular location.

The protein localises to the cytoplasm. In terms of biological role, the JNK-interacting protein (JIP) group of scaffold proteins selectively mediates JNK-signaling by aggregating specific components of the MAPK cascade to form a functional JNK signaling module. May function as a regulator of vesicle transport, through interactions with the JNK-signaling components and motor proteins. Syd is required for efficient kinesin-I mediated axonal transport. The chain is JNK-interacting protein 3 (syd) from Drosophila melanogaster (Fruit fly).